Reading from the N-terminus, the 324-residue chain is DNA repair and recombination protein RadA (324 aa).

ATP is bound at residue 114–121 (GEFGSGKT).

Belongs to the eukaryotic RecA-like protein family.

In terms of biological role, involved in DNA repair and in homologous recombination. Binds and assemble on single-stranded DNA to form a nucleoprotein filament. Hydrolyzes ATP in a ssDNA-dependent manner and promotes DNA strand exchange between homologous DNA molecules. The protein is DNA repair and recombination protein RadA of Sulfurisphaera tokodaii (strain DSM 16993 / JCM 10545 / NBRC 100140 / 7) (Sulfolobus tokodaii).